Here is a 173-residue protein sequence, read N- to C-terminus: Peptide methionine sulfoxide reductase MsrA (173 aa).

The active site involves C10.

The protein belongs to the MsrA Met sulfoxide reductase family.

The enzyme catalyses L-methionyl-[protein] + [thioredoxin]-disulfide + H2O = L-methionyl-(S)-S-oxide-[protein] + [thioredoxin]-dithiol. It carries out the reaction [thioredoxin]-disulfide + L-methionine + H2O = L-methionine (S)-S-oxide + [thioredoxin]-dithiol. Its function is as follows. Has an important function as a repair enzyme for proteins that have been inactivated by oxidation. Catalyzes the reversible oxidation-reduction of methionine sulfoxide in proteins to methionine. The chain is Peptide methionine sulfoxide reductase MsrA from Nautilia profundicola (strain ATCC BAA-1463 / DSM 18972 / AmH).